A 135-amino-acid polypeptide reads, in one-letter code: Ribosome-binding factor A (135 aa).

It belongs to the RbfA family. As to quaternary structure, monomer. Binds 30S ribosomal subunits, but not 50S ribosomal subunits or 70S ribosomes.

It is found in the cytoplasm. In terms of biological role, one of several proteins that assist in the late maturation steps of the functional core of the 30S ribosomal subunit. Associates with free 30S ribosomal subunits (but not with 30S subunits that are part of 70S ribosomes or polysomes). Required for efficient processing of 16S rRNA. May interact with the 5'-terminal helix region of 16S rRNA. The chain is Ribosome-binding factor A from Aliivibrio fischeri (strain ATCC 700601 / ES114) (Vibrio fischeri).